The primary structure comprises 208 residues: Small ribosomal subunit protein uS4 (208 aa).

A disordered region spans residues 31-51 (SALDKRAYGPGQHGQRRAKTS). The S4 RNA-binding domain occupies 98–156 (RRLDNVVYRMGFATTRSSARQLVTHGHVLVDGKRLDIPSYFVRSGQKIEIKEKTKSNPQ).

This sequence belongs to the universal ribosomal protein uS4 family. In terms of assembly, part of the 30S ribosomal subunit. Contacts protein S5. The interaction surface between S4 and S5 is involved in control of translational fidelity.

One of the primary rRNA binding proteins, it binds directly to 16S rRNA where it nucleates assembly of the body of the 30S subunit. In terms of biological role, with S5 and S12 plays an important role in translational accuracy. The protein is Small ribosomal subunit protein uS4 of Helicobacter pylori (strain HPAG1).